Reading from the N-terminus, the 259-residue chain is Zinc import ATP-binding protein ZnuC (259 aa).

One can recognise an ABC transporter domain in the interval 11–225 (IRLENIYVHR…PEYLAIFGGQ (215 aa)). An ATP-binding site is contributed by 43–50 (GPNGAGKS).

This sequence belongs to the ABC transporter superfamily. Zinc importer (TC 3.A.1.15.5) family. The complex is composed of two ATP-binding proteins (ZnuC), two transmembrane proteins (ZnuB) and a solute-binding protein (ZnuA).

The protein resides in the cell inner membrane. It catalyses the reaction Zn(2+)(out) + ATP(in) + H2O(in) = Zn(2+)(in) + ADP(in) + phosphate(in) + H(+)(in). Its function is as follows. Part of the ABC transporter complex ZnuABC involved in zinc import. Responsible for energy coupling to the transport system. This chain is Zinc import ATP-binding protein ZnuC, found in Acinetobacter baylyi (strain ATCC 33305 / BD413 / ADP1).